We begin with the raw amino-acid sequence, 356 residues long: Peptide chain release factor 1 (356 aa).

Position 235 is an N5-methylglutamine (Gln235).

Belongs to the prokaryotic/mitochondrial release factor family. Post-translationally, methylated by PrmC. Methylation increases the termination efficiency of RF1.

It localises to the cytoplasm. Its function is as follows. Peptide chain release factor 1 directs the termination of translation in response to the peptide chain termination codons UAG and UAA. This chain is Peptide chain release factor 1, found in Mycobacteroides abscessus (strain ATCC 19977 / DSM 44196 / CCUG 20993 / CIP 104536 / JCM 13569 / NCTC 13031 / TMC 1543 / L948) (Mycobacterium abscessus).